Here is a 149-residue protein sequence, read N- to C-terminus: Leghemoglobin (149 aa).

The region spanning 3–147 (AFSEKQESLV…LAAAIKKAMG (145 aa)) is the Globin domain. Y31 is subject to Nitrated tyrosine. S46 serves as a coordination point for heme b. The residue at position 46 (S46) is a Phosphoserine. Residue H62 participates in O2 binding. Heme b is bound by residues K65, H94, and K97. Y135 bears the Nitrated tyrosine mark.

It belongs to the plant globin family. Monomer. Post-translationally, nitrated in effective nodules and particularly in hypoxic conditions; this mechanism may play a protective role in the symbiosis by buffering toxic peroxynitrite NO(2)(-). Nitration level decrease during nodule senescence. Phosphorylation at Ser-46 disrupts the molecular environment of its porphyrin ring oxygen binding pocket, thus leading to a reduced oxygen consumption and to the delivery of oxygen O(2) to symbiosomes. In terms of tissue distribution, root nodules.

It is found in the cytoplasm. Its subcellular location is the cytosol. It localises to the nucleus. In terms of biological role, leghemoglobin that reversibly binds oxygen O(2) through a pentacoordinated heme iron. In root nodules, facilitates the diffusion of oxygen to the bacteroids while preventing the bacterial nitrogenase from being inactivated by buffering dioxygen, nitric oxide and carbon monoxide, and promoting the formation of reactive oxygen species (ROS, e.g. H(2)O(2)). This role is essential for symbiotic nitrogen fixation (SNF). The protein is Leghemoglobin of Canavalia lineata (Beach bean).